The chain runs to 394 residues: Deoxyguanosinetriphosphate triphosphohydrolase-like protein (394 aa).

The disordered stretch occupies residues Met-1–Phe-36. Positions Phe-25–Phe-36 are enriched in basic and acidic residues. The 141-residue stretch at Arg-70 to Asn-210 folds into the HD domain.

This sequence belongs to the dGTPase family. Type 2 subfamily.

The sequence is that of Deoxyguanosinetriphosphate triphosphohydrolase-like protein from Caulobacter vibrioides (strain ATCC 19089 / CIP 103742 / CB 15) (Caulobacter crescentus).